The chain runs to 456 residues: uncharacterized protein (456 aa).

The TRAM domain occupies 5–63 (LVKKGQQISLKIKRLGINGEGIGYYKKLIIFVPGALPKEEVTATITNVTPKFAEGTLQS). Cys76, Cys82, Cys85, and Cys165 together coordinate [4Fe-4S] cluster. 4 residues coordinate S-adenosyl-L-methionine: Gln289, Tyr318, Asp339, and Asp387. Cys414 acts as the Nucleophile in catalysis.

Belongs to the class I-like SAM-binding methyltransferase superfamily. RNA M5U methyltransferase family.

This is an uncharacterized protein from Enterococcus faecalis (strain ATCC 700802 / V583).